The primary structure comprises 154 residues: Low molecular weight protein-tyrosine-phosphatase PtpA (154 aa).

Cysteine 8 (nucleophile) is an active-site residue. Arginine 14 is a catalytic residue. The active-site Proton donor is aspartate 120.

The protein belongs to the low molecular weight phosphotyrosine protein phosphatase family.

It carries out the reaction O-phospho-L-tyrosyl-[protein] + H2O = L-tyrosyl-[protein] + phosphate. Dephosphorylates the phosphotyrosine-containing proteins. This is Low molecular weight protein-tyrosine-phosphatase PtpA (ptpA) from Staphylococcus epidermidis (strain ATCC 35984 / DSM 28319 / BCRC 17069 / CCUG 31568 / BM 3577 / RP62A).